Reading from the N-terminus, the 317-residue chain is Small ribosomal subunit biogenesis GTPase RsgA (317 aa).

The CP-type G domain occupies 88–249 (DQYKSKLFAA…LIDSPGFQEF (162 aa)). GTP-binding positions include 136–139 (NKID) and 190–198 (GQSGMGKST). The Zn(2+) site is built by cysteine 273, cysteine 278, histidine 280, and cysteine 286.

It belongs to the TRAFAC class YlqF/YawG GTPase family. RsgA subfamily. In terms of assembly, monomer. Associates with 30S ribosomal subunit, binds 16S rRNA. The cofactor is Zn(2+).

It is found in the cytoplasm. In terms of biological role, one of several proteins that assist in the late maturation steps of the functional core of the 30S ribosomal subunit. Helps release RbfA from mature subunits. May play a role in the assembly of ribosomal proteins into the subunit. Circularly permuted GTPase that catalyzes slow GTP hydrolysis, GTPase activity is stimulated by the 30S ribosomal subunit. The polypeptide is Small ribosomal subunit biogenesis GTPase RsgA (Paraburkholderia phymatum (strain DSM 17167 / CIP 108236 / LMG 21445 / STM815) (Burkholderia phymatum)).